The following is an 831-amino-acid chain: SID1 transmembrane family member 1 (831 aa).

An N-terminal signal peptide occupies residues 1 to 19; sequence MLDCPRLALLCALPWLLRA. The Extracellular portion of the chain corresponds to 20 to 308; that stretch reads AVPGHRAEPL…SVKGSVYVKS (289 aa). 4 N-linked (GlcNAc...) asparagine glycosylation sites follow: Asn67, Asn83, Asn136, and Asn281. A helical membrane pass occupies residues 309 to 329; that stretch reads SLFSVFVFLSFYLGCLLVVFV. Topologically, residues 330-441 are cytoplasmic; the sequence is HHMRFQRKPV…DRRIVSKKYK (112 aa). A disordered region spans residues 354 to 408; that stretch reads VSHPITASTPEGSNYGAIDESSSSPGRQMSSSDGGQPCHSDTDSSVEESDFDTMP. A compositionally biased stretch (low complexity) spans 374–385; sequence SSSSPGRQMSSS. Residues 397 to 408 show a composition bias toward acidic residues; that stretch reads SSVEESDFDTMP. The helical transmembrane segment at 442–462 threads the bilayer; sequence IYFWNIITIAVFYALPVMQLV. Residues 463-493 lie on the Extracellular side of the membrane; sequence ITYQTVVNVTGNQDICYYNFLCAHPLGVLSA. Residue Asn470 is glycosylated (N-linked (GlcNAc...) asparagine). The chain crosses the membrane as a helical span at residues 494–514; the sequence is FNNILSNLGHVLLGFLFLLIV. Over 515-540 the chain is Cytoplasmic; sequence LRRDLLHRRALEAKDIFAMEYGIPKH. A helical membrane pass occupies residues 541-561; that stretch reads FGLFYAMGIALMMEGVLSACY. The Extracellular segment spans residues 562-571; that stretch reads HVCPNYSNFQ. N-linked (GlcNAc...) asparagine glycosylation is present at Asn566. Residues 572 to 589 traverse the membrane as a helical segment; the sequence is FDTSFMYMIAGLCMLKLY. Topologically, residues 590 to 599 are cytoplasmic; the sequence is QTRHPDINAS. A helical membrane pass occupies residues 600 to 620; the sequence is AYSAYASFAVVITLTVLGVVF. Residues 621–625 are Extracellular-facing; it reads GKNDV. A helical transmembrane segment spans residues 626-646; the sequence is WFWIIFSAIHVLASLALSTQI. Over 647-687 the chain is Cytoplasmic; the sequence is YYMGRFKIDVSDTDLGIFRRAAMVFYTDCIQQCSRPLYMDR. The helical transmembrane segment at 688 to 708 threads the bilayer; the sequence is MVLLIVGNLVNWSFALFGLIY. At 709–714 the chain is on the extracellular side; that stretch reads RPRDFA. A helical membrane pass occupies residues 715-735; that stretch reads SYMLGIFICNLLLYLAFYIIM. The Cytoplasmic portion of the chain corresponds to 736 to 745; the sequence is KLRSSEKVLP. The chain crosses the membrane as a helical span at residues 746 to 766; the sequence is LPVFCIVATAVVWAAALYFFF. Topologically, residues 767 to 795 are extracellular; the sequence is QNLSSWEGTPAESREKNRECVLLGFFDDH. Asn768 carries an N-linked (GlcNAc...) asparagine glycan. The chain crosses the membrane as a helical span at residues 796 to 816; sequence DIWHFLSATALFFSFLVLLTL. Residues 817-831 lie on the Cytoplasmic side of the membrane; it reads DDDLDVVRRDQIPVF.

This sequence belongs to the SID1 family.

Its subcellular location is the membrane. In vitro binds long double-stranded RNA (dsRNA) (500 and 700 base pairs), but not dsRNA shorter than 300 bp. Not involved in RNA autophagy, a process in which RNA is directly imported into lysosomes in an ATP-dependent manner, and degraded. In Rattus norvegicus (Rat), this protein is SID1 transmembrane family member 1 (Sidt1).